The primary structure comprises 312 residues: Heterotepalin-4 (312 aa).

The N-terminal stretch at 1-22 is a signal peptide; that stretch reads MKSMLVVTISVWLILAPTSTWA. 2 disulfides stabilise this stretch: C56/C280 and C107/C128. The active site involves E197. Positions 284–312 are excised as a propeptide; that stretch reads YNQNAMFPQLIMSTYYNYMANLGDLFEEF.

The catalysed reaction is Endohydrolysis of the N-glycosidic bond at one specific adenosine on the 28S rRNA.. Inhibits protein synthesis in vitro. The protein is Heterotepalin-4 of Phytolacca heterotepala (Mexican pokeweed).